The primary structure comprises 374 residues: All-trans-retinol dehydrogenase [NAD(+)] ADH7 (374 aa).

An N-acetylmethionine modification is found at Met1. Positions 47, 68, 98, 101, 104, 112, and 174 each coordinate Zn(2+). Residues 199 to 204, Asp223, Lys228, 292 to 294, and Arg369 contribute to the NAD(+) site; these read GLGGVG and VGA.

This sequence belongs to the zinc-containing alcohol dehydrogenase family. Class-IV subfamily. As to quaternary structure, homodimer. The cofactor is Zn(2+). Preferentially expressed in stomach.

It is found in the cytoplasm. It carries out the reaction a primary alcohol + NAD(+) = an aldehyde + NADH + H(+). The enzyme catalyses 10-hydroxydecanoate + NAD(+) = 10-oxodecanoate + NADH + H(+). The catalysed reaction is all-trans-retinol + NAD(+) = all-trans-retinal + NADH + H(+). It catalyses the reaction 9-cis-retinol + NAD(+) = 9-cis-retinal + NADH + H(+). It carries out the reaction all-trans-3,4-didehydroretinol + NAD(+) = all-trans-3,4-didehydroretinal + NADH + H(+). The enzyme catalyses all-trans-4-hydroxyretinol + NAD(+) = all-trans-4-hydroxyretinal + NADH + H(+). The catalysed reaction is all-trans-4-oxoretinol + NAD(+) = all-trans-4-oxoretinal + NADH + H(+). It catalyses the reaction 12-hydroxydodecanoate + NAD(+) = 12-oxododecanoate + NADH + H(+). It carries out the reaction 16-hydroxyhexadecanoate + NAD(+) = 16-oxohexadecanoate + NADH + H(+). The enzyme catalyses hexan-1-ol + NAD(+) = hexanal + NADH + H(+). The catalysed reaction is (E)-hex-2-en-1-ol + NAD(+) = (E)-hex-2-enal + NADH + H(+). It catalyses the reaction (E)-4-hydroxynon-2-en-1-ol + NAD(+) = (E)-4-hydroxynon-2-enal + NADH + H(+). With respect to regulation, retinol oxidation is inhibited by the detergent Tween 80. Ethanol inhibits both all-trans-retinol and 9-cis-retinol oxidation. 13-cis-retinol is an effective competitive inhibitor of the 9-cis-retinol oxidation. All-trans-retinoic acid is a powerful inhibitor of all-trans-retinol oxidation. 13-cis-retinoic acid is a powerful inhibitor of all-trans-retinol oxidation. Cimetidine and ranitidine inhibited ethanol oxidation. In terms of biological role, catalyzes the NAD-dependent oxidation of all-trans-retinol, alcohol, aldehyde and omega-hydroxy fatty acids and their derivatives. Oxidizes preferentially all trans-retinol, all-trans-4-hydroxyretinol, 9-cis-retinol, 2-hexenol, and long chain omega-hydroxy fatty acids such as juniperic acid. In vitro can also catalyze the NADH-dependent reduction of all-trans-retinal and aldehydes and their derivatives. Reduces preferentially all trans-retinal, all-trans-4-oxoretinal and hexanal. Catalyzes in the oxidative direction with higher efficiency. Therefore may participate in retinoid metabolism, fatty acid omega-oxidation, and elimination of cytotoxic aldehydes produced by lipid peroxidation. The protein is All-trans-retinol dehydrogenase [NAD(+)] ADH7 (Adh7) of Rattus norvegicus (Rat).